The chain runs to 101 residues: NAD(P)H-quinone oxidoreductase subunit 4L, chloroplastic (101 aa).

3 consecutive transmembrane segments (helical) span residues 2 to 22, 32 to 52, and 61 to 81; these read MLEHVLVLSAYLFSIGIYGLI, MCLELILNAVNINLVTFSDLF, and IFSIFVIAIAAAEAAIGPAIV.

This sequence belongs to the complex I subunit 4L family. In terms of assembly, NDH is composed of at least 16 different subunits, 5 of which are encoded in the nucleus.

It localises to the plastid. The protein localises to the chloroplast thylakoid membrane. The catalysed reaction is a plastoquinone + NADH + (n+1) H(+)(in) = a plastoquinol + NAD(+) + n H(+)(out). The enzyme catalyses a plastoquinone + NADPH + (n+1) H(+)(in) = a plastoquinol + NADP(+) + n H(+)(out). Its function is as follows. NDH shuttles electrons from NAD(P)H:plastoquinone, via FMN and iron-sulfur (Fe-S) centers, to quinones in the photosynthetic chain and possibly in a chloroplast respiratory chain. The immediate electron acceptor for the enzyme in this species is believed to be plastoquinone. Couples the redox reaction to proton translocation, and thus conserves the redox energy in a proton gradient. The sequence is that of NAD(P)H-quinone oxidoreductase subunit 4L, chloroplastic from Illicium oligandrum (Star anise).